Here is a 510-residue protein sequence, read N- to C-terminus: Inositol-3-phosphate synthase (510 aa).

24 residues coordinate NAD(+): glycine 70, glycine 71, asparagine 72, asparagine 73, aspartate 143, isoleucine 180, glutamine 190, arginine 193, threonine 230, alanine 231, asparagine 232, threonine 233, glycine 281, serine 282, aspartate 306, serine 309, asparagine 340, asparagine 341, aspartate 342, lysine 355, alanine 393, aspartate 394, aspartate 422, and serine 423.

Belongs to the myo-inositol 1-phosphate synthase family. NAD(+) serves as cofactor.

It localises to the cytoplasm. The protein resides in the cytosol. Its subcellular location is the nucleus. The catalysed reaction is D-glucose 6-phosphate = 1D-myo-inositol 3-phosphate. It functions in the pathway polyol metabolism; myo-inositol biosynthesis; myo-inositol from D-glucose 6-phosphate: step 1/2. Functionally, key enzyme in myo-inositol biosynthesis pathway that catalyzes the conversion of glucose 6-phosphate to 1-myo-inositol 1-phosphate in a NAD-dependent manner. This chain is Inositol-3-phosphate synthase, found in Brassica napus (Rape).